The following is a 332-amino-acid chain: Phenylalanine--tRNA ligase alpha subunit (332 aa).

Glutamate 252 contributes to the Mg(2+) binding site.

The protein belongs to the class-II aminoacyl-tRNA synthetase family. Phe-tRNA synthetase alpha subunit type 1 subfamily. In terms of assembly, tetramer of two alpha and two beta subunits. The cofactor is Mg(2+).

It localises to the cytoplasm. It carries out the reaction tRNA(Phe) + L-phenylalanine + ATP = L-phenylalanyl-tRNA(Phe) + AMP + diphosphate + H(+). This is Phenylalanine--tRNA ligase alpha subunit from Marinobacter nauticus (strain ATCC 700491 / DSM 11845 / VT8) (Marinobacter aquaeolei).